We begin with the raw amino-acid sequence, 157 residues long: 2-C-methyl-D-erythritol 2,4-cyclodiphosphate synthase (157 aa).

Asp8 and His10 together coordinate a divalent metal cation. 4-CDP-2-C-methyl-D-erythritol 2-phosphate is bound by residues 8 to 10 (DVH) and 34 to 35 (HS). His42 contacts a divalent metal cation. 4-CDP-2-C-methyl-D-erythritol 2-phosphate is bound by residues 56 to 58 (DIG), 132 to 135 (TTNE), and Arg142.

The protein belongs to the IspF family. As to quaternary structure, homotrimer. It depends on a divalent metal cation as a cofactor.

It catalyses the reaction 4-CDP-2-C-methyl-D-erythritol 2-phosphate = 2-C-methyl-D-erythritol 2,4-cyclic diphosphate + CMP. Its pathway is isoprenoid biosynthesis; isopentenyl diphosphate biosynthesis via DXP pathway; isopentenyl diphosphate from 1-deoxy-D-xylulose 5-phosphate: step 4/6. In terms of biological role, involved in the biosynthesis of isopentenyl diphosphate (IPP) and dimethylallyl diphosphate (DMAPP), two major building blocks of isoprenoid compounds. Catalyzes the conversion of 4-diphosphocytidyl-2-C-methyl-D-erythritol 2-phosphate (CDP-ME2P) to 2-C-methyl-D-erythritol 2,4-cyclodiphosphate (ME-CPP) with a corresponding release of cytidine 5-monophosphate (CMP). This chain is 2-C-methyl-D-erythritol 2,4-cyclodiphosphate synthase, found in Pelodictyon phaeoclathratiforme (strain DSM 5477 / BU-1).